The sequence spans 345 residues: NADPH dehydrogenase (345 aa).

Residue 23–26 (SPMC) participates in FMN binding. Tyr-28 is a binding site for substrate. Residues Ala-60 and Gln-102 each contribute to the FMN site. 164-167 (HGAH) is a binding site for substrate. FMN is bound by residues Arg-215 and 307 to 308 (GR).

It belongs to the NADH:flavin oxidoreductase/NADH oxidase family. NamA subfamily. In terms of assembly, homotetramer. The cofactor is FMN.

The catalysed reaction is A + NADPH + H(+) = AH2 + NADP(+). Functionally, catalyzes the reduction of the double bond of an array of alpha,beta-unsaturated aldehydes and ketones. It also reduces the nitro group of nitroester and nitroaromatic compounds. It could have a role in detoxification processes. This Bacillus anthracis (strain CDC 684 / NRRL 3495) protein is NADPH dehydrogenase.